Here is a 145-residue protein sequence, read N- to C-terminus: Large ribosomal subunit protein uL15 (145 aa).

The disordered stretch occupies residues 1–52 (MFNLLKPKGASKRRKIVGRGPGSGLGKTSGRGQKGQKARNTSPRLGFEGGQT). Positions 19–33 (RGPGSGLGKTSGRGQ) are enriched in gly residues.

The protein belongs to the universal ribosomal protein uL15 family. As to quaternary structure, part of the 50S ribosomal subunit.

Functionally, binds to the 23S rRNA. This Borreliella burgdorferi (strain ATCC 35210 / DSM 4680 / CIP 102532 / B31) (Borrelia burgdorferi) protein is Large ribosomal subunit protein uL15.